Reading from the N-terminus, the 551-residue chain is Cytosolic Fe-S cluster assembly factor NAR1 (551 aa).

C20, C57, C60, C63, C178, and C242 together coordinate [4Fe-4S] cluster. The interval 395–435 is disordered; the sequence is DPSGHKKRSVRRVAALRSRGRKDSSSEDSTGTPSAISNALG. A compositionally biased stretch (polar residues) spans 421-431; it reads EDSTGTPSAIS. C451 is a [4Fe-4S] cluster binding site.

It belongs to the NARF family.

Functionally, component of the cytosolic Fe/S protein assembly machinery. Required for maturation of extramitochondrial Fe/S proteins. May play a role in the transfer of pre-assembled Fe/S clusters to target apoproteins. In Candida glabrata (strain ATCC 2001 / BCRC 20586 / JCM 3761 / NBRC 0622 / NRRL Y-65 / CBS 138) (Yeast), this protein is Cytosolic Fe-S cluster assembly factor NAR1 (NAR1).